Reading from the N-terminus, the 156-residue chain is 3-hydroxyacyl-[acyl-carrier-protein] dehydratase FabZ (156 aa).

Residue His57 is part of the active site.

It belongs to the thioester dehydratase family. FabZ subfamily.

It is found in the cytoplasm. The enzyme catalyses a (3R)-hydroxyacyl-[ACP] = a (2E)-enoyl-[ACP] + H2O. Functionally, involved in unsaturated fatty acids biosynthesis. Catalyzes the dehydration of short chain beta-hydroxyacyl-ACPs and long chain saturated and unsaturated beta-hydroxyacyl-ACPs. The chain is 3-hydroxyacyl-[acyl-carrier-protein] dehydratase FabZ from Anaeromyxobacter dehalogenans (strain 2CP-1 / ATCC BAA-258).